A 365-amino-acid chain; its full sequence is DNA replication and repair protein RecF (365 aa).

An ATP-binding site is contributed by 30 to 37 (GPNGSGKT).

The protein belongs to the RecF family.

The protein localises to the cytoplasm. Functionally, the RecF protein is involved in DNA metabolism; it is required for DNA replication and normal SOS inducibility. RecF binds preferentially to single-stranded, linear DNA. It also seems to bind ATP. In Azotobacter vinelandii (strain DJ / ATCC BAA-1303), this protein is DNA replication and repair protein RecF.